Reading from the N-terminus, the 498-residue chain is ATP synthase subunit beta, chloroplastic (498 aa).

172 to 179 (GGAGVGKT) lines the ATP pocket.

The protein belongs to the ATPase alpha/beta chains family. As to quaternary structure, F-type ATPases have 2 components, CF(1) - the catalytic core - and CF(0) - the membrane proton channel. CF(1) has five subunits: alpha(3), beta(3), gamma(1), delta(1), epsilon(1). CF(0) has four main subunits: a(1), b(1), b'(1) and c(9-12).

It is found in the plastid. Its subcellular location is the chloroplast thylakoid membrane. It catalyses the reaction ATP + H2O + 4 H(+)(in) = ADP + phosphate + 5 H(+)(out). Produces ATP from ADP in the presence of a proton gradient across the membrane. The catalytic sites are hosted primarily by the beta subunits. This Zea mays (Maize) protein is ATP synthase subunit beta, chloroplastic.